A 340-amino-acid polypeptide reads, in one-letter code: Cytoskeleton protein RodZ (340 aa).

Over 1–111 (MNTEATQEKS…LGKQRKKRDG (111 aa)) the chain is Cytoplasmic. The region spanning 19–79 (LRTAREQMGL…RLVHVPEEEL (61 aa)) is the HTH cro/C1-type domain. The segment at residues 30–49 (QQNVAERLCLKLSTIRDIEE) is a DNA-binding region (H-T-H motif). A helical; Signal-anchor for type II membrane protein transmembrane segment spans residues 112–132 (WLMIFTWLVLFVVLGLTGAWW). Residues 133–340 (WQNHKAAQDD…QVARLTVGAP (208 aa)) lie on the Periplasmic side of the membrane. The interval 162 to 252 (ALSDDNANGG…AAPLPTGSAA (91 aa)) is disordered. Positions 183 to 201 (ATANNAPSSVTATSDNGTP) are enriched in polar residues. The segment covering 202–233 (AATAQSSQVTASNAAPAANAVNDNTPPVAVAP) has biased composition (low complexity).

This sequence belongs to the RodZ family.

The protein localises to the cell inner membrane. In terms of biological role, cytoskeletal protein that is involved in cell-shape control through regulation of the length of the long axis. In Erwinia tasmaniensis (strain DSM 17950 / CFBP 7177 / CIP 109463 / NCPPB 4357 / Et1/99), this protein is Cytoskeleton protein RodZ.